The following is a 507-amino-acid chain: Protoheme IX farnesyltransferase, mitochondrial (507 aa).

Residues 72–90 (STSASASTTHDSTLSSSPT) are compositionally biased toward low complexity. Positions 72–136 (STSASASTTH…RGEKPLPPDA (65 aa)) are disordered. The span at 99–111 (KDHKIAPHRKRQA) shows a compositional bias: basic residues. A run of 8 helical transmembrane segments spans residues 166-186 (LTML…VPEM), 199-219 (PLTL…ANAL), 248-268 (AAVL…YFGV), 270-290 (PTVS…YTPL), 298-318 (TWIG…AAAG), 339-359 (IGGW…FMAL), 392-412 (FVFI…WSFA), and 441-461 (GLFW…LLHK).

This sequence belongs to the UbiA prenyltransferase family.

It is found in the mitochondrion membrane. It catalyses the reaction heme b + (2E,6E)-farnesyl diphosphate + H2O = Fe(II)-heme o + diphosphate. Its function is as follows. Converts protoheme IX and farnesyl diphosphate to heme O. This is Protoheme IX farnesyltransferase, mitochondrial (COX10) from Gibberella zeae (strain ATCC MYA-4620 / CBS 123657 / FGSC 9075 / NRRL 31084 / PH-1) (Wheat head blight fungus).